A 254-amino-acid polypeptide reads, in one-letter code: Aspartate/glutamate leucyltransferase (254 aa).

The protein belongs to the R-transferase family. Bpt subfamily.

The protein resides in the cytoplasm. The enzyme catalyses N-terminal L-glutamyl-[protein] + L-leucyl-tRNA(Leu) = N-terminal L-leucyl-L-glutamyl-[protein] + tRNA(Leu) + H(+). It carries out the reaction N-terminal L-aspartyl-[protein] + L-leucyl-tRNA(Leu) = N-terminal L-leucyl-L-aspartyl-[protein] + tRNA(Leu) + H(+). Functionally, functions in the N-end rule pathway of protein degradation where it conjugates Leu from its aminoacyl-tRNA to the N-termini of proteins containing an N-terminal aspartate or glutamate. This is Aspartate/glutamate leucyltransferase from Mesorhizobium japonicum (strain LMG 29417 / CECT 9101 / MAFF 303099) (Mesorhizobium loti (strain MAFF 303099)).